The sequence spans 106 residues: Pyrimidine/purine nucleoside phosphorylase (106 aa).

It belongs to the nucleoside phosphorylase PpnP family.

It catalyses the reaction a purine D-ribonucleoside + phosphate = a purine nucleobase + alpha-D-ribose 1-phosphate. The enzyme catalyses adenosine + phosphate = alpha-D-ribose 1-phosphate + adenine. It carries out the reaction cytidine + phosphate = cytosine + alpha-D-ribose 1-phosphate. The catalysed reaction is guanosine + phosphate = alpha-D-ribose 1-phosphate + guanine. It catalyses the reaction inosine + phosphate = alpha-D-ribose 1-phosphate + hypoxanthine. The enzyme catalyses thymidine + phosphate = 2-deoxy-alpha-D-ribose 1-phosphate + thymine. It carries out the reaction uridine + phosphate = alpha-D-ribose 1-phosphate + uracil. The catalysed reaction is xanthosine + phosphate = alpha-D-ribose 1-phosphate + xanthine. Its function is as follows. Catalyzes the phosphorolysis of diverse nucleosides, yielding D-ribose 1-phosphate and the respective free bases. Can use uridine, adenosine, guanosine, cytidine, thymidine, inosine and xanthosine as substrates. Also catalyzes the reverse reactions. This chain is Pyrimidine/purine nucleoside phosphorylase, found in Leptospira interrogans serogroup Icterohaemorrhagiae serovar copenhageni (strain Fiocruz L1-130).